A 230-amino-acid polypeptide reads, in one-letter code: Type II restriction enzyme NlaIII (230 aa).

It catalyses the reaction Endonucleolytic cleavage of DNA to give specific double-stranded fragments with terminal 5'-phosphates.. In terms of biological role, a P subtype restriction enzyme that recognizes the double-stranded sequence 5'-CATG-3' and cleaves after G-4. This Neisseria lactamica protein is Type II restriction enzyme NlaIII (nlaIIIR).